The primary structure comprises 688 residues: SRSF protein kinase 2 (688 aa).

Residues 1–65 (MSVNSEKSSS…EQEDPADYCK (65 aa)) form a disordered region. Residues 22–43 (LVPPPPPPPPPPPPPLPDPTPP) are compositionally biased toward pro residues. Residues 44-61 (EPEEEILGSDDEEQEDPA) are compositionally biased toward acidic residues. Ser-52 carries the post-translational modification Phosphoserine. Residues 81-684 (YHVIRKLGWG…ASAGECLRHP (604 aa)) form the Protein kinase domain. ATP is bound by residues 87–95 (LGWGHFSTV) and Lys-110. The Proton acceptor role is filled by Asp-214. Disordered stretches follow at residues 239 to 277 (WQKA…KKQK), 329 to 444 (GLEE…GRHK), and 469 to 501 (SVLS…TGDL). Positions 265 to 277 (SKNKKKKLKKKQK) are enriched in basic residues. Ser-380 carries the phosphoserine modification. Over residues 397-421 (QLDDEDDDEEDCPNPEEYNLDEPNA) the composition is skewed to acidic residues. A compositionally biased stretch (polar residues) spans 423 to 433 (SDYTYSSSYEQ). Ser-475 carries the phosphoserine modification. Thr-478 carries the phosphothreonine modification. Phosphoserine occurs at positions 484, 486, and 490. The residue at position 492 (Thr-492) is a Phosphothreonine; by PKB/AKT1. Ser-494 and Ser-497 each carry phosphoserine. Ser-588 bears the Phosphoserine; by CK2 mark.

The protein belongs to the protein kinase superfamily. CMGC Ser/Thr protein kinase family. In terms of assembly, associates with U4/U6-U5 tri-small nuclear ribonucleoproteins (U4/U6-U5 tri-snRNPs). Interacts with PKB/AKT1 in a phosphorylation-dependent manner. The phosphorylated form (by PKB/AKT1) interacts with YWHAB and YWHAE. Interaction with YWHAB suppresses its cleavage by caspases and inhibits the release of its N-terminal pro-apoptotic fragment. Interacts with SFN. Interacts with ACIN1. Interacts with POLR2A/RNA polymerase II; the interaction occurs during the co-transcriptional formation of inappropriate R-loops. The cofactor is Mg(2+). Phosphorylation at Thr-492 by PKB/AKT1 enhances its stimulatory activity in triggering cyclin-D1 (CCND1) expression and promoting apoptosis in neurons, which can be blocked by YWHAB. It also enhances its protein kinase activity toward ACIN1 and SRSF2, promotes its nuclear translocation and prevents its proteolytic cleavage. Post-translationally, proteolytically cleaved at Asp-139 and Asp-403 by caspase-3 during apoptotic cell death. Cleavage at Asp-139 which is the major site of cleavage, produces a small N-terminal fragment that translocates into nucleus and promotes VP16-induced apoptosis. Highly expressed in brain, moderately expressed in heart and skeletal muscle and at low levels in lung, liver, and kidney.

It localises to the cytoplasm. It is found in the nucleus. The protein resides in the nucleoplasm. The protein localises to the nucleus speckle. Its subcellular location is the chromosome. It catalyses the reaction L-seryl-[protein] + ATP = O-phospho-L-seryl-[protein] + ADP + H(+). The catalysed reaction is L-threonyl-[protein] + ATP = O-phospho-L-threonyl-[protein] + ADP + H(+). Activated by phosphorylation on Ser-52 and Ser-588. In terms of biological role, serine/arginine-rich protein-specific kinase which specifically phosphorylates its substrates at serine residues located in regions rich in arginine/serine dipeptides, known as RS domains and is involved in the phosphorylation of SR splicing factors and the regulation of splicing. Promotes neuronal apoptosis by up-regulating cyclin-D1 (CCND1) expression. This is done by the phosphorylation of SRSF2, leading to the suppression of p53/TP53 phosphorylation thereby relieving the repressive effect of p53/TP53 on cyclin-D1 (CCND1) expression. Phosphorylates ACIN1, and redistributes it from the nuclear speckles to the nucleoplasm, resulting in cyclin A1 but not cyclin A2 up-regulation. Plays an essential role in spliceosomal B complex formation via the phosphorylation of DDX23/PRP28. Probably by phosphorylating DDX23, leads to the suppression of incorrect R-loops formed during transcription; R-loops are composed of a DNA:RNA hybrid and the associated non-template single-stranded DNA. Can mediate hepatitis B virus (HBV) core protein phosphorylation. Plays a negative role in the regulation of HBV replication through a mechanism not involving the phosphorylation of the core protein but by reducing the packaging efficiency of the pregenomic RNA (pgRNA) without affecting the formation of the viral core particles. This Homo sapiens (Human) protein is SRSF protein kinase 2.